The following is a 192-amino-acid chain: Thymidine kinase (192 aa).

Residues 9 to 16 (GAMNSGKT) and 85 to 88 (DEAQ) each bind ATP. The Proton acceptor role is filled by Glu86. Positions 143, 146, 180, and 183 each coordinate Zn(2+).

This sequence belongs to the thymidine kinase family. Homotetramer.

The protein localises to the cytoplasm. It carries out the reaction thymidine + ATP = dTMP + ADP + H(+). The sequence is that of Thymidine kinase from Lactiplantibacillus plantarum (strain ATCC BAA-793 / NCIMB 8826 / WCFS1) (Lactobacillus plantarum).